A 1827-amino-acid polypeptide reads, in one-letter code: Sucrase-isomaltase, intestinal (1827 aa).

The Cytoplasmic portion of the chain corresponds to 2 to 12 (ARKKFSGLEIS). At Ser-7 the chain carries Phosphoserine; by PKA. A helical; Signal-anchor for type II membrane protein membrane pass occupies residues 13-32 (LIVLFVIVTIIAIALIVVLA). Residues 33–1827 (TKTPAVDEIS…LEEPIEINWS (1795 aa)) are Lumenal-facing. The segment at 40 to 61 (EISDSTSTPATTRVTTNPSDSG) is disordered. A compositionally biased stretch (low complexity) spans 45-55 (TSTPATTRVTT). The 50-residue stretch at 61–110 (GKCPNVLNDPVNVRINCIPEQFPTEGICAQRGCCWRPWNDSLIPWCFFVD) folds into the P-type 1 domain. 3 cysteine pairs are disulfide-bonded: Cys-63–Cys-94, Cys-77–Cys-93, and Cys-88–Cys-106. A glycan (N-linked (GlcNAc...) asparagine) is linked at Asn-99. The isomaltase stretch occupies residues 110 to 1007 (DNHGYNVQDM…DLQLNTANAR (898 aa)). 2 positions are modified to sulfotyrosine: Tyr-237 and Tyr-239. Residues Asp-264 and Asp-388 each contribute to the substrate site. Residues Tyr-391 and Tyr-400 each carry the sulfotyrosine modification. 2 N-linked (GlcNAc...) asparagine glycosylation sites follow: Asn-437 and Asn-455. The Nucleophile; for isomaltase activity role is filled by Asp-505. Cys-520 and Cys-545 are disulfide-bonded. Arg-588 lines the substrate pocket. The For isomaltase activity role is filled by Asp-604. Residues Cys-635 and Cys-646 are joined by a disulfide bond. Residue His-662 participates in substrate binding. Sulfotyrosine occurs at positions 667, 763, and 765. 4 N-linked (GlcNAc...) asparagine glycosylation sites follow: Asn-823, Asn-855, Asn-904, and Asn-926. One can recognise a P-type 2 domain in the interval 932 to 978 (NQIFSENERFNCYPDADLATEQKCTQRGCVWRTGSSLSKAPECYFPR). The sucrase stretch occupies residues 1008 to 1827 (IKLPSDPIST…LEEPIEINWS (820 aa)). 4 N-linked (GlcNAc...) asparagine glycosylation sites follow: Asn-1235, Asn-1303, Asn-1340, and Asn-1354. Residue Asp-1394 is the Nucleophile; for sucrase activity of the active site. Residue Glu-1397 is the For sucrase activity of the active site. The N-linked (GlcNAc...) asparagine glycan is linked to Asn-1403. The active-site Proton donor; for isomaltase activity is Asp-1500. N-linked (GlcNAc...) asparagine glycans are attached at residues Asn-1535, Asn-1572, Asn-1675, Asn-1748, Asn-1763, and Asn-1815.

The protein belongs to the glycosyl hydrolase 31 family. The resulting sucrase and isomaltase subunits stay associated with one another in a complex by non-covalent linkages. In terms of processing, the precursor is proteolytically cleaved when exposed to pancreatic proteases in the intestinal lumen. Post-translationally, sulfated. Expressed in the poorly differentiated crypt cells of the small intestine as well as in the mature villous cells. Expressed at very low levels in the colon.

It localises to the apical cell membrane. The enzyme catalyses Hydrolysis of sucrose and maltose by an alpha-D-glucosidase-type action.. The catalysed reaction is Hydrolysis of (1-&gt;6)-alpha-D-glucosidic linkages in some oligosaccharides produced from starch and glycogen by alpha-amylase, and in isomaltose.. Functionally, plays an important role in the final stage of carbohydrate digestion. Isomaltase activity is specific for both alpha-1,4- and alpha-1,6-oligosaccharides. This chain is Sucrase-isomaltase, intestinal (SI), found in Homo sapiens (Human).